A 20-amino-acid polypeptide reads, in one-letter code: Putative 18 kDa spermidine-binding protein (20 aa).

As to quaternary structure, dimer of 18 kDa and 60 kDa subunit.

Its subcellular location is the microsome membrane. It is found in the endoplasmic reticulum membrane. May have spermidine-binding activity. In Zea mays (Maize), this protein is Putative 18 kDa spermidine-binding protein.